The chain runs to 336 residues: Deoxyhypusine hydroxylase (336 aa).

2 HEAT-like PBS-type repeats span residues 68 to 94 (LKHE…VVQD) and 101 to 127 (CRHE…LRDN). Fe cation contacts are provided by histidine 70, glutamate 71, histidine 103, and glutamate 104. Residues 158–179 (LKPSDFTSIDPAPPMPLTAKEP) are disordered. HEAT-like PBS-type repeat units lie at residues 235-261 (FRHE…TLSD) and 268-295 (VRHE…FLND). Positions 237, 238, 270, and 271 each coordinate Fe cation.

It belongs to the deoxyhypusine hydroxylase family. Fe(2+) is required as a cofactor.

The protein resides in the cytoplasm. Its subcellular location is the nucleus. The enzyme catalyses [eIF5A protein]-deoxyhypusine + AH2 + O2 = [eIF5A protein]-hypusine + A + H2O. Its pathway is protein modification; eIF5A hypusination. Functionally, catalyzes the hydroxylation of the N(6)-(4-aminobutyl)-L-lysine intermediate to form hypusine, an essential post-translational modification only found in mature eIF-5A factor. In Emericella nidulans (strain FGSC A4 / ATCC 38163 / CBS 112.46 / NRRL 194 / M139) (Aspergillus nidulans), this protein is Deoxyhypusine hydroxylase (lia1).